Reading from the N-terminus, the 259-residue chain is Src-like-adapter 2 (259 aa).

Residues 1 to 20 (MGSLSSRGKTSSPSPSSSGP) are compositionally biased toward low complexity. Positions 1–30 (MGSLSSRGKTSSPSPSSSGPDQEPVSMQPE) are disordered. G2 carries N-myristoyl glycine lipidation. In terms of domain architecture, SH3 spans 31 to 91 (RHKVTAVALG…PSVYVAKVAH (61 aa)). The 98-residue stretch at 93-190 (WLYEGLSREK…GICCPLREPC (98 aa)) folds into the SH2 domain. The interval 190-259 (CVLQKLGPLP…SLAEDPLDDA (70 aa)) is SLA C-terminal.

As to quaternary structure, interacts (via its C-terminal domain) with CBL (phosphorylated). Interacts (via SH2 domain) with ZAP70 (phosphorylated) and CD3Z (phosphorylated). Interacts (via SH2 domain) with CSF1R (phosphorylated). Phosphorylated by CSF1R. As to expression, mainly expressed in immune system. Highly expressed in spleen and thymus and expressed at intermediate levels in lung. Not expressed in liver, heart and brain. Isoform 1 is predominant in lung and spleen, while isoform 2 is predominant in thymus.

The protein localises to the cytoplasm. The protein resides in the cell membrane. It is found in the cytoplasmic vesicle. Its subcellular location is the late endosome. In terms of biological role, adapter protein, which negatively regulates T-cell receptor (TCR) signaling. Inhibits T-cell antigen-receptor induced activation of nuclear factor of activated T-cells. May act by linking signaling proteins such as ZAP70 with CBL, leading to a CBL dependent degradation of signaling proteins. In Mus musculus (Mouse), this protein is Src-like-adapter 2 (Sla2).